Here is a 126-residue protein sequence, read N- to C-terminus: Large ribosomal subunit protein bL12 (126 aa).

The protein belongs to the bacterial ribosomal protein bL12 family. Homodimer. Part of the ribosomal stalk of the 50S ribosomal subunit. Forms a multimeric L10(L12)X complex, where L10 forms an elongated spine to which 2 to 4 L12 dimers bind in a sequential fashion. Binds GTP-bound translation factors.

Functionally, forms part of the ribosomal stalk which helps the ribosome interact with GTP-bound translation factors. Is thus essential for accurate translation. In Nocardia farcinica (strain IFM 10152), this protein is Large ribosomal subunit protein bL12.